We begin with the raw amino-acid sequence, 206 residues long: Small ribosomal subunit protein uS4 (206 aa).

The region spanning 96 to 156 (CRLDNVVYRM…EKAKNQLRIV (61 aa)) is the S4 RNA-binding domain.

It belongs to the universal ribosomal protein uS4 family. As to quaternary structure, part of the 30S ribosomal subunit. Contacts protein S5. The interaction surface between S4 and S5 is involved in control of translational fidelity.

One of the primary rRNA binding proteins, it binds directly to 16S rRNA where it nucleates assembly of the body of the 30S subunit. Functionally, with S5 and S12 plays an important role in translational accuracy. This is Small ribosomal subunit protein uS4 from Pseudomonas fluorescens (strain Pf0-1).